The chain runs to 373 residues: Histidinol-phosphate aminotransferase (373 aa).

Lys233 bears the N6-(pyridoxal phosphate)lysine mark.

Belongs to the class-II pyridoxal-phosphate-dependent aminotransferase family. Histidinol-phosphate aminotransferase subfamily. In terms of assembly, homodimer. Requires pyridoxal 5'-phosphate as cofactor.

The catalysed reaction is L-histidinol phosphate + 2-oxoglutarate = 3-(imidazol-4-yl)-2-oxopropyl phosphate + L-glutamate. It participates in amino-acid biosynthesis; L-histidine biosynthesis; L-histidine from 5-phospho-alpha-D-ribose 1-diphosphate: step 7/9. The polypeptide is Histidinol-phosphate aminotransferase (Nitratidesulfovibrio vulgaris (strain DP4) (Desulfovibrio vulgaris)).